We begin with the raw amino-acid sequence, 523 residues long: Probable malate:quinone oxidoreductase 1 (523 aa).

This sequence belongs to the MQO family. The cofactor is FAD.

It catalyses the reaction (S)-malate + a quinone = a quinol + oxaloacetate. The protein operates within carbohydrate metabolism; tricarboxylic acid cycle; oxaloacetate from (S)-malate (quinone route): step 1/1. This is Probable malate:quinone oxidoreductase 1 from Pseudomonas aeruginosa (strain ATCC 15692 / DSM 22644 / CIP 104116 / JCM 14847 / LMG 12228 / 1C / PRS 101 / PAO1).